We begin with the raw amino-acid sequence, 448 residues long: ATP-dependent protease ATPase subunit HslU (448 aa).

ATP contacts are provided by residues valine 21, 63–68, aspartate 261, glutamate 326, and arginine 398; that span reads GVGKTE.

It belongs to the ClpX chaperone family. HslU subfamily. In terms of assembly, a double ring-shaped homohexamer of HslV is capped on each side by a ring-shaped HslU homohexamer. The assembly of the HslU/HslV complex is dependent on binding of ATP.

It is found in the cytoplasm. ATPase subunit of a proteasome-like degradation complex; this subunit has chaperone activity. The binding of ATP and its subsequent hydrolysis by HslU are essential for unfolding of protein substrates subsequently hydrolyzed by HslV. HslU recognizes the N-terminal part of its protein substrates and unfolds these before they are guided to HslV for hydrolysis. The chain is ATP-dependent protease ATPase subunit HslU from Persephonella marina (strain DSM 14350 / EX-H1).